Here is a 556-residue protein sequence, read N- to C-terminus: 2-succinyl-5-enolpyruvyl-6-hydroxy-3-cyclohexene-1-carboxylate synthase (556 aa).

Belongs to the TPP enzyme family. MenD subfamily. As to quaternary structure, homodimer. Mg(2+) serves as cofactor. Mn(2+) is required as a cofactor. The cofactor is thiamine diphosphate.

The catalysed reaction is isochorismate + 2-oxoglutarate + H(+) = 5-enolpyruvoyl-6-hydroxy-2-succinyl-cyclohex-3-ene-1-carboxylate + CO2. It participates in quinol/quinone metabolism; 1,4-dihydroxy-2-naphthoate biosynthesis; 1,4-dihydroxy-2-naphthoate from chorismate: step 2/7. The protein operates within quinol/quinone metabolism; menaquinone biosynthesis. Catalyzes the thiamine diphosphate-dependent decarboxylation of 2-oxoglutarate and the subsequent addition of the resulting succinic semialdehyde-thiamine pyrophosphate anion to isochorismate to yield 2-succinyl-5-enolpyruvyl-6-hydroxy-3-cyclohexene-1-carboxylate (SEPHCHC). This Staphylococcus epidermidis (strain ATCC 12228 / FDA PCI 1200) protein is 2-succinyl-5-enolpyruvyl-6-hydroxy-3-cyclohexene-1-carboxylate synthase.